The chain runs to 117 residues: Prefoldin subunit beta (117 aa).

Belongs to the prefoldin subunit beta family. In terms of assembly, heterohexamer of two alpha and four beta subunits.

It is found in the cytoplasm. Its function is as follows. Molecular chaperone capable of stabilizing a range of proteins. Seems to fulfill an ATP-independent, HSP70-like function in archaeal de novo protein folding. The chain is Prefoldin subunit beta from Thermococcus gammatolerans (strain DSM 15229 / JCM 11827 / EJ3).